The chain runs to 354 residues: Uroporphyrinogen decarboxylase (354 aa).

Residues 27-31 (RQAGR), Asp77, Tyr153, Thr208, and His326 each bind substrate.

This sequence belongs to the uroporphyrinogen decarboxylase family. As to quaternary structure, homodimer.

The protein localises to the cytoplasm. It carries out the reaction uroporphyrinogen III + 4 H(+) = coproporphyrinogen III + 4 CO2. It participates in porphyrin-containing compound metabolism; protoporphyrin-IX biosynthesis; coproporphyrinogen-III from 5-aminolevulinate: step 4/4. Catalyzes the decarboxylation of four acetate groups of uroporphyrinogen-III to yield coproporphyrinogen-III. This Neisseria gonorrhoeae (strain NCCP11945) protein is Uroporphyrinogen decarboxylase.